A 284-amino-acid chain; its full sequence is Deoxyribonuclease-1 (284 aa).

The first 22 residues, Met-1–Thr-22, serve as a signal peptide directing secretion. An N-linked (GlcNAc...) asparagine glycan is attached at Asn-40. Glu-100 is a catalytic residue. A disulfide bond links Cys-123 and Cys-126. Asn-128 carries N-linked (GlcNAc...) asparagine glycosylation. Residue His-156 is part of the active site. A disulfide bridge links Cys-195 with Cys-231.

The protein belongs to the DNase I family. Requires Ca(2+) as cofactor. Mg(2+) serves as cofactor.

The protein localises to the secreted. Its subcellular location is the zymogen granule. The protein resides in the nucleus envelope. The catalysed reaction is Endonucleolytic cleavage to 5'-phosphodinucleotide and 5'-phosphooligonucleotide end-products.. In terms of biological role, serum endocuclease secreted into body fluids by a wide variety of exocrine and endocrine organs. Expressed by non-hematopoietic tissues and preferentially cleaves protein-free DNA. Among other functions, seems to be involved in cell death by apoptosis. Binds specifically to G-actin and blocks actin polymerization. Together with DNASE1L3, plays a key role in degrading neutrophil extracellular traps (NETs). NETs are mainly composed of DNA fibers and are released by neutrophils to bind pathogens during inflammation. Degradation of intravascular NETs by DNASE1 and DNASE1L3 is required to prevent formation of clots that obstruct blood vessels and cause organ damage following inflammation. This is Deoxyribonuclease-1 (Dnase1) from Rattus norvegicus (Rat).